The sequence spans 352 residues: Photosystem II D2 protein 2 (352 aa).

The helical transmembrane segment at 40–60 (CAYLALGGWLTGTSFVTSWYT) threads the bilayer. Chlorophyll a is bound at residue His117. The chain crosses the membrane as a helical span at residues 124-140 (GFMLRQFEIARLVGVRP). The pheophytin a site is built by Gln129 and Asn142. A helical membrane pass occupies residues 152–165 (VFVSVFLMYPLGQS). Residue His197 coordinates chlorophyll a. A helical transmembrane segment spans residues 207-227 (GALLCAIHGATVENTLFEDSE). 2 residues coordinate a plastoquinone: His214 and Phe261. His214 serves as a coordination point for Fe cation. Fe cation is bound at residue His268. A helical membrane pass occupies residues 278-294 (GLWMSSIGIVGLALNLR).

It belongs to the reaction center PufL/M/PsbA/D family. PSII is composed of 1 copy each of membrane proteins PsbA, PsbB, PsbC, PsbD, PsbE, PsbF, PsbH, PsbI, PsbJ, PsbK, PsbL, PsbM, PsbT, PsbX, PsbY, PsbZ, Psb30/Ycf12, peripheral proteins PsbO, CyanoQ (PsbQ), PsbU, PsbV and a large number of cofactors. It forms dimeric complexes. It depends on The D1/D2 heterodimer binds P680, chlorophylls that are the primary electron donor of PSII, and subsequent electron acceptors. It shares a non-heme iron and each subunit binds pheophytin, quinone, additional chlorophylls, carotenoids and lipids. There is also a Cl(-1) ion associated with D1 and D2, which is required for oxygen evolution. The PSII complex binds additional chlorophylls, carotenoids and specific lipids. as a cofactor.

The protein localises to the cellular thylakoid membrane. The enzyme catalyses 2 a plastoquinone + 4 hnu + 2 H2O = 2 a plastoquinol + O2. Photosystem II (PSII) is a light-driven water:plastoquinone oxidoreductase that uses light energy to abstract electrons from H(2)O, generating O(2) and a proton gradient subsequently used for ATP formation. It consists of a core antenna complex that captures photons, and an electron transfer chain that converts photonic excitation into a charge separation. The D1/D2 (PsbA/PsbD) reaction center heterodimer binds P680, the primary electron donor of PSII as well as several subsequent electron acceptors. D2 is needed for assembly of a stable PSII complex. The sequence is that of Photosystem II D2 protein 2 from Synechococcus sp. (strain ATCC 27144 / PCC 6301 / SAUG 1402/1) (Anacystis nidulans).